A 429-amino-acid chain; its full sequence is MLNPQTRRVRLFARGSWAETRRIAGILRDETISGGLLLAATVLALGWANSPWSGTYDSLLATDFGPAALHLDLSVQQWAADGLLAIFFFVAGLELKREFVAGDLRDPSRAVVPVAAAAGGVAVPAVLYSLLNLHSGALRGWAIPTATDIAFALSVLAVVGRCLPTALRTFLLTLAVVDDLLAIVIIAVAYTGELSVVPLVAAVVPLAAFTLLVQRRVRAWWLLLPLAVLTWALVHASGVHATVAGVLLAFAVPVLRSEGAGGPQAGPGLAEHFEHRWRPLSAAVAVPVFAFCSAGVTVGGLGGLGDALSDRAALGVVVGLVVGKAIGIFTTTWLVARFTGASLERGLAWVDVAGLALLGGVGFTVSLLIGELAFGPGSARDDHVKVGVLTASVTAALLATVVLRLRNRAYARIHELETADDDHEDGPDA.

The next 12 membrane-spanning stretches (helical) occupy residues 32–52 (ISGG…NSPW), 73–93 (LSVQ…VAGL), 111–131 (VVPV…YSLL), 140–160 (GWAI…AVVG), 170–190 (FLLT…AVAY), 193–213 (ELSV…TLLV), 219–239 (AWWL…ASGV), 243–263 (VAGV…AGGP), 284–304 (VAVP…LGGL), 316–336 (VVVG…WLVA), 349–369 (WVDV…SLLI), and 383–403 (HVKV…TVVL).

This sequence belongs to the NhaA Na(+)/H(+) (TC 2.A.33) antiporter family.

It is found in the cell membrane. The catalysed reaction is Na(+)(in) + 2 H(+)(out) = Na(+)(out) + 2 H(+)(in). Its function is as follows. Na(+)/H(+) antiporter that extrudes sodium in exchange for external protons. In Frankia alni (strain DSM 45986 / CECT 9034 / ACN14a), this protein is Na(+)/H(+) antiporter NhaA 1.